The following is a 311-amino-acid chain: HTH-type transcriptional regulator DsdC (311 aa).

An HTH lysR-type domain is found at 15 to 72; the sequence is WQLSKMHTFEVAARHQSFALAAEELSLSPSAVSHRINQLEEELGIQLFVRSHRKVELT. The H-T-H motif DNA-binding region spans 32–51; sequence FALAAEELSLSPSAVSHRIN.

Belongs to the LysR transcriptional regulatory family.

Functionally, regulates the expression of the dsdX-dsdA operon. The sequence is that of HTH-type transcriptional regulator DsdC from Escherichia coli (strain K12).